A 144-amino-acid polypeptide reads, in one-letter code: uncharacterized protein (144 aa).

A signal peptide spans 1–22 (MCTDVAFFSLDCLATWLGGVCS).

This is an uncharacterized protein from Saccharomyces cerevisiae (strain ATCC 204508 / S288c) (Baker's yeast).